The sequence spans 268 residues: Hemolysin C (268 aa).

CBS domains follow at residues 52 to 111 and 114 to 171; these read MVPR…NFSL and ILHK…IRDE.

It belongs to the UPF0053 family.

Bacterial hemolysins are exotoxins that attack blood cell membranes and cause cell rupture by mechanisms not clearly defined. This chain is Hemolysin C (tlyC), found in Brachyspira hyodysenteriae (Treponema hyodysenteriae).